The chain runs to 295 residues: Small ribosomal subunit protein uS2 (295 aa).

Position 2 is an N-acetylserine (S2). Phosphoserine is present on S43. N6-acetyllysine is present on K52. Residues 54–113 (TWEKLLLAARAIVAIENPADVSVISSRNTGQRAVLKFAAATGATPIAGRFTPGTFTNQIQ) form an interaction with PPP1R16B region. At K89 the chain carries N6-acetyllysine; alternate. A Glycyl lysine isopeptide (Lys-Gly) (interchain with G-Cter in SUMO2); alternate cross-link involves residue K89. Residue T97 is modified to Phosphothreonine. Laminin-binding regions lie at residues 161-180 (IPCN…MLAR) and 205-229 (RDPE…EFQG). [DE]-W-[ST] repeat units lie at residues 230-232 (EWT), 247-249 (DWS), 266-268 (DWS), 275-277 (DWS), and 293-295 (EWS). Residues 242–295 (QPEVADWSEGVQVPSVPIQQFPTEDWSAQPATEDWSAAPTAQATEWVGATTEWS) form a laminin-binding region. Positions 266–295 (DWSAQPATEDWSAAPTAQATEWVGATTEWS) are disordered.

Belongs to the universal ribosomal protein uS2 family. As to quaternary structure, monomer (37LRP) and homodimer (67LR). Component of the small ribosomal subunit. Mature ribosomes consist of a small (40S) and a large (60S) subunit. The 40S subunit contains about 33 different proteins and 1 molecule of RNA (18S). The 60S subunit contains about 49 different proteins and 3 molecules of RNA (28S, 5.8S and 5S). Interacts with RPS21. Interacts with several laminins including at least LAMB1. Interacts with MDK. Interacts with PRNP. The mature dimeric form interacts with PPP1R16B (via its fourth ankyrin repeat). Interacts with PPP1CA only in the presence of PPP1R16B. Post-translationally, acylated. Acylation may be a prerequisite for conversion of the monomeric 37 kDa laminin receptor precursor (37LRP) to the mature dimeric 67 kDa laminin receptor (67LR), and may provide a mechanism for membrane association. In terms of processing, cleaved by stromelysin-3 (ST3) at the cell surface. Cleavage by stromelysin-3 may be a mechanism to alter cell-extracellular matrix interactions.

The protein resides in the cell membrane. It localises to the cytoplasm. Its subcellular location is the nucleus. In terms of biological role, required for the assembly and/or stability of the 40S ribosomal subunit. Required for the processing of the 20S rRNA-precursor to mature 18S rRNA in a late step of the maturation of 40S ribosomal subunits. Also functions as a cell surface receptor for laminin. Plays a role in cell adhesion to the basement membrane and in the consequent activation of signaling transduction pathways. May play a role in cell fate determination and tissue morphogenesis. Also acts as a receptor for several other ligands, including the pathogenic prion protein, viruses, and bacteria. Acts as a PPP1R16B-dependent substrate of PPP1CA. Enables malignant tumor cells to penetrate laminin tissue and vessel barriers. Activates precursor thymic anti-OFA/iLRP specific cytotoxic T-cell. May induce CD8 T-suppressor cells secreting IL-10. The polypeptide is Small ribosomal subunit protein uS2 (Rpsa) (Mus musculus (Mouse)).